Here is a 410-residue protein sequence, read N- to C-terminus: Acetyltransferase aurG (410 aa).

3 helical membrane passes run 3 to 23 (LWLV…VVCF), 28 to 48 (SLVR…GLIL), and 59 to 79 (WSLV…VGLI). The segment covering 90-99 (TSSRGGQPNA) has biased composition (polar residues). The disordered stretch occupies residues 90 to 112 (TSSRGGQPNASLDLAGRKKPPSS). An N-linked (GlcNAc...) asparagine glycan is attached at N98. The next 4 membrane-spanning stretches (helical) occupy residues 157–177 (AMTL…GGDL), 219–239 (MYFS…MVGL), 300–320 (ILAT…YSYG), and 364–384 (IGYV…FFPL).

It belongs to the wax synthase family.

The protein resides in the membrane. It participates in polyketide biosynthesis. Functionally, acetyltransferase; part of the gene cluster that mediates the biosynthesis of aurovertins, fungal polyketides that exhibit potent inhibition of adenosine triphosphate synthase. Tha biosynthesis starts with the HR-PKS aurA that selects propionate as the starter unit; synthesizes a hexa-ene chain through the repeated functions of the KR and DH domains in the first six iterations; selectively introduces three alpha-methyl substitutions at C4, C6, and C16 using the S-adensylmethionine-dependent cMET; and shuts off KR and DH in the last three iterations to afford a 1,3,5-triketo portion that can undergo intramolecular cyclization to yield the alpha-pyrone intermediate. AurE may act as a cyclase and enhances the rate of pyrone formation and product release of aurA. The methyltransferase aurB then methylates the C17 hydroxyl group. C17 methylation is required to initiate epoxidation by the downstream monooxygenase aurC. The monooxygenase aurC and the epoxide hydrolase aurD can iteratively transform the terminal triene portion of the methylated precursor into the dioxabicyclo[3.2.1]octane scaffold of aurovertin E. Epoxidation modifications of the precursor occur in two separate steps; bis-epoxidation of the two terminal olefins takes place first, followed by another epoxidation that occurs at C7-C8 after tetrahydrofuran formation. The O-acyltransferase aurG converts aurovertin E to aurovertin A. This Calcarisporium arbuscula (Dendryphion arbuscula) protein is Acetyltransferase aurG.